The sequence spans 572 residues: Putative inorganic phosphate transporter C8E4.01c (572 aa).

The Cytoplasmic segment spans residues Met-1–Leu-47. Ser-12 and Ser-14 each carry phosphoserine. Residues Met-48–Val-68 traverse the membrane as a helical segment. Topologically, residues Thr-69 to Asn-99 are extracellular. Residues Ala-100–Phe-120 traverse the membrane as a helical segment. At Gly-121–Lys-123 the chain is on the cytoplasmic side. Residues Phe-124–Pro-144 traverse the membrane as a helical segment. At Lys-145–Lys-153 the chain is on the extracellular side. Residues Met-154 to Met-174 form a helical membrane-spanning segment. Over Ser-175 to Ser-193 the chain is Cytoplasmic. The helical transmembrane segment at Leu-194–Leu-214 threads the bilayer. Topologically, residues Gly-215–Lys-229 are extracellular. The helical transmembrane segment at Leu-230–Ile-250 threads the bilayer. The Cytoplasmic segment spans residues Pro-251 to Lys-346. Residues Lys-265–Glu-297 form a disordered region. Basic and acidic residues predominate over residues Asn-286–Ser-296. Ser-292 and Ser-296 each carry phosphoserine. A helical transmembrane segment spans residues His-347–Leu-367. The Extracellular portion of the chain corresponds to Asn-368 to Asn-395. Residues Leu-396–Ile-416 form a helical membrane-spanning segment. Over Leu-417–Lys-420 the chain is Cytoplasmic. The chain crosses the membrane as a helical span at residues Trp-421 to Trp-441. The Extracellular portion of the chain corresponds to Asn-442–Arg-449. Residues Phe-450–Ile-470 form a helical membrane-spanning segment. At Tyr-471–His-485 the chain is on the cytoplasmic side. The chain crosses the membrane as a helical span at residues Gly-486–Leu-506. Residues Thr-507–Gly-508 are Extracellular-facing. The helical transmembrane segment at Val-509 to Phe-529 threads the bilayer. Over Thr-530 to Phe-572 the chain is Cytoplasmic.

It belongs to the major facilitator superfamily. Sugar transporter (TC 2.A.1.1) family.

The protein resides in the membrane. Its function is as follows. High-affinity transporter for external inorganic phosphate. This Schizosaccharomyces pombe (strain 972 / ATCC 24843) (Fission yeast) protein is Putative inorganic phosphate transporter C8E4.01c.